A 320-amino-acid chain; its full sequence is Short-chain dehydrogenase/reductase ARMGADRAFT_1169971 (320 aa).

The chain crosses the membrane as a helical span at residues 19–39 (KVAVVTGANSGIGLYILFHVA). NADP(+) is bound by residues isoleucine 30, aspartate 78, asparagine 105, and lysine 136. N-linked (GlcNAc...) asparagine glycosylation occurs at asparagine 157. Serine 159 (proton donor) is an active-site residue. NADP(+) is bound by residues tyrosine 192, lysine 196, valine 227, and serine 229. Tyrosine 192 functions as the Proton acceptor in the catalytic mechanism. The Lowers pKa of active site Tyr role is filled by lysine 196. The helical transmembrane segment at 235-255 (LFTSLMFGTIINWVFSLFFIS) threads the bilayer.

It belongs to the short-chain dehydrogenases/reductases (SDR) family.

Its subcellular location is the membrane. It participates in secondary metabolite biosynthesis. In terms of biological role, short-chain dehydrogenase/reductase, part of the gene cluster that mediates the biosynthesis of melleolides, a range of antifungal and phytotoxic polyketide derivatives composed of an orsellinic acid (OA) moiety esterified to various sesquiterpene alcohols. The first step in melleolides biosynthesis is performed by the delta(6)-protoilludene synthase PRO1 which catalyzes the cyclization of farnesyl diphosphate to protoilludene. The orsellinic acid synthase armB produces OA by condensing acetyl-CoA with 3 malonyl-CoA units in a three-round chain elongation reaction folowed by a C2-C7 ring closure. ArmB further catalyzes the trans-esterification of OA to the various sesquiterpene alcohols resulting from the hydroxylation of protoilludene. The melleolides cluster also includes 5 cytochrome P450 monooxygenases, 4 NAD(+)-dependent oxidoreductases, one flavin-dependent oxidoreductase, and one O-methyltransferase. The cytochrome P450 monooxygenases may be involved in protoilludene hydroxylation to elaborate melleolides with multiple alcohol groups, such as melleolide D, which carries alcohol functionalities at C-4, C-5, C-10, and C-13. The role of the NAD(+)-dependent enzymes remains unknown. Numerous melleolides, including arnamial, show 5'-O-methylation of the aromatic moiety which may be catalyzed by the methyltransferase encoded in the cluster. The flavin-dependent oxidoreductase might represent the dehydrogenase yielding the aldehyde in position 1 of arnamial and other melleolides. Finally, several halogenase localized outside of the cluster, are able to catalyze the transfer of a single chlorine atom to the melleolide backbone, resulting in a 6'-chloromelleolide product. This chain is Short-chain dehydrogenase/reductase ARMGADRAFT_1169971, found in Armillaria gallica (Bulbous honey fungus).